Here is a 323-residue protein sequence, read N- to C-terminus: MSFRPGSRGGARGGRGGSRGGFGGRGGSRGGFGGRGGSRGGSRGGFGGRGGSRGGPRGGSRGGPRGGARGGARGGAKGGAKVVIEPHKHDGVYIARGKEDLLVTKNMAPGESVYGEKRVSVEEPSKEDGVPPTKVEYRVWNPFRSKLAAGIMGGLDELFIAPGKKVLYLGAASGTSVSHVSDVVGPEGVVYAVEFSHRPGRELISMAKKRPNVIPIIEDARHPQKYRMLVGMVDAVFADVAQPDQARIIALNSHMFLKDQGGVVISIKANCIDSTVDAETVFAREVQKLREEKIKPLEQLTLEPYERDHCIVIGRYMRSGLKK.

The disordered stretch occupies residues 1–80; the sequence is MSFRPGSRGG…GARGGAKGGA (80 aa). The segment covering 7–78 has biased composition (gly residues); the sequence is SRGGARGGRG…RGGARGGAKG (72 aa). Residues Arg-8, Arg-12, Arg-15, Arg-19, Arg-25, Arg-29, Arg-35, Arg-39, Arg-43, Arg-49, Arg-53, Arg-57, Arg-61, Arg-65, Arg-69, and Arg-73 each carry the asymmetric dimethylarginine modification. Residues 175–176, 194–195, 219–220, and 239–242 each bind S-adenosyl-L-methionine; these read TS, EF, DA, and DVAQ.

This sequence belongs to the methyltransferase superfamily. Fibrillarin family. In terms of assembly, component of box C/D small nucleolar ribonucleoprotein (snoRNP) particles that contain SNU13, NOP1, SIK1/NOP56 and NOP58, plus a guide RNA. Post-translationally, by homology to other fibrillarins, some or all of the N-terminal domain arginines are modified to asymmetric dimethylarginine (DMA).

It localises to the nucleus. The protein resides in the nucleolus. It carries out the reaction L-glutaminyl-[histone H2A] + S-adenosyl-L-methionine = N(5)-methyl-L-glutaminyl-[histone H2A] + S-adenosyl-L-homocysteine + H(+). In terms of biological role, S-adenosyl-L-methionine-dependent methyltransferase that has the ability to methylate both RNAs and proteins. Involved in pre-rRNA processing. Utilizes the methyl donor S-adenosyl-L-methionine to catalyze the site-specific 2'-hydroxyl methylation of ribose moieties in pre-ribosomal RNA. Site specificity is provided by a guide RNA that base pairs with the substrate. Methylation occurs at a characteristic distance from the sequence involved in base pairing with the guide RNA. Also acts as a protein methyltransferase by mediating methylation of 'Gln-105' of histone H2A (H2AQ105me), a modification that impairs binding of the FACT complex and is specifically present at 35S ribosomal DNA locus. The chain is rRNA 2'-O-methyltransferase fibrillarin (NOP1) from Candida glabrata (strain ATCC 2001 / BCRC 20586 / JCM 3761 / NBRC 0622 / NRRL Y-65 / CBS 138) (Yeast).